We begin with the raw amino-acid sequence, 359 residues long: WW domain-binding protein wbp-11 (359 aa).

Disordered stretches follow at residues 1–38 (MPSI…DRQQ), 235–264 (PSSY…NPMG), and 317–341 (PGDN…QKQA). The span at 8 to 27 (KSGERYRAPTDQARKMDRKK) shows a compositional bias: basic and acidic residues. A compositionally biased stretch (basic residues) spans 245–256 (MPHHHHHHHPHA).

Activates pre-mRNA splicing. May inhibit PP1 phosphatase activity. This Caenorhabditis elegans protein is WW domain-binding protein wbp-11.